The sequence spans 98 residues: Citrate lyase acyl carrier protein (98 aa).

At Ser14 the chain carries O-(phosphoribosyl dephospho-coenzyme A)serine.

It belongs to the CitD family. In terms of assembly, oligomer with a subunit composition of (alpha,beta,gamma)6.

It localises to the cytoplasm. Functionally, covalent carrier of the coenzyme of citrate lyase. The polypeptide is Citrate lyase acyl carrier protein (Escherichia coli O127:H6 (strain E2348/69 / EPEC)).